The chain runs to 452 residues: GTPase Der (452 aa).

EngA-type G domains are found at residues 9-170 and 185-362; these read KIIA…PEED and LQIV…KTWN. Residues 15–22, 62–66, 124–127, 191–198, 238–242, and 303–306 contribute to the GTP site; these read GRPNVGKS, DTPGF, NKCE, GRPNAGKS, DTAGL, and NKWD. The 86-residue stretch at 363 to 448 folds into the KH-like domain; that stretch reads KKITTSKLNE…PIRFNYIKTK (86 aa).

It belongs to the TRAFAC class TrmE-Era-EngA-EngB-Septin-like GTPase superfamily. EngA (Der) GTPase family. Associates with the 50S ribosomal subunit.

In terms of biological role, GTPase that plays an essential role in the late steps of ribosome biogenesis. The polypeptide is GTPase Der (Rickettsia bellii (strain OSU 85-389)).